The following is a 202-amino-acid chain: Dephospho-CoA kinase (202 aa).

One can recognise a DPCK domain in the interval 6–202 (KISVTGDPSS…QCFKALKGTI (197 aa)). 14–19 (SSGKTE) is an ATP binding site.

The protein belongs to the CoaE family.

It is found in the cytoplasm. It catalyses the reaction 3'-dephospho-CoA + ATP = ADP + CoA + H(+). Its pathway is cofactor biosynthesis; coenzyme A biosynthesis; CoA from (R)-pantothenate: step 5/5. Catalyzes the phosphorylation of the 3'-hydroxyl group of dephosphocoenzyme A to form coenzyme A. The protein is Dephospho-CoA kinase of Chlamydia trachomatis serovar D (strain ATCC VR-885 / DSM 19411 / UW-3/Cx).